Consider the following 851-residue polypeptide: Pentatricopeptide repeat-containing protein At3g54980, mitochondrial (851 aa).

The transit peptide at 1–26 directs the protein to the mitochondrion; that stretch reads MRSLLVFRKIPSRIRLRNLRNNKPFC. 19 PPR repeats span residues 162–196, 197–231, 232–266, 267–301, 303–337, 338–372, 373–407, 408–438, 442–476, 477–511, 512–546, 547–577, 583–617, 618–652, 653–687, 688–722, 723–757, 758–792, and 793–827; these read NSRAFNYLLNAYSKDRQTDHAVDIVNQMLELDVIP, FFPYVNRTLSALVQRNSLTEAKELYSRMVAIGVDG, DNVTTQLLMRASLREEKPAEALEVLSRAIERGAEP, DSLLYSLAVQACCKTLDLAMANSLLREMKEKKLCV, SQETYTSVILASVKQGNMDDAIRLKDEMLSDGISM, NVVAATSLITGHCKNNDLVSALVLFDKMEKEGPSP, NSVTFSVLIEWFRKNGEMEKALEFYKKMEVLGLTP, SVFHVHTIIQGWLKGQKHEEALKLFDESFET, NVFVCNTILSWLCKQGKTDEATELLSKMESRGIGP, NVVSYNNVMLGHCRQKNMDLARIVFSNILEKGLKP, NNYTYSILIDGCFRNHDEQNALEVVNHMTSSNIEV, NGVVYQTIINGLCKVGQTSKARELLANMIEE, SCMSYNSIIDGFFKEGEMDSAVAAYEEMCGNGISP, NVITYTSLMNGLCKNNRMDQALEMRDEMKNKGVKL, DIPAYGALIDGFCKRSNMESASALFSELLEEGLNP, SQPIYNSLISGFRNLGNMVAALDLYKKMLKDGLRC, DLGTYTTLIDGLLKDGNLILASELYTEMQAVGLVP, DEIIYTVIVNGLSKKGQFVKVVKMFEEMKKNNVTP, and NVLIYNAVIAGHYREGNLDEAFRLHDEMLDKGILP.

This sequence belongs to the PPR family. P subfamily.

Its subcellular location is the mitochondrion. This chain is Pentatricopeptide repeat-containing protein At3g54980, mitochondrial, found in Arabidopsis thaliana (Mouse-ear cress).